Consider the following 256-residue polypeptide: Homeobox protein Hox-D13a (256 aa).

Residues 191–250 (GRKKRVPYTKFQLKELEREYNTTKFITKENRRRIASSTNLSERQVTIWFQNRRVKDKKRP) constitute a DNA-binding region (homeobox).

It belongs to the Abd-B homeobox family.

The protein localises to the nucleus. Its function is as follows. Sequence-specific transcription factor which is part of a developmental regulatory system that provides cells with specific positional identities on the anterior-posterior axis. This Danio rerio (Zebrafish) protein is Homeobox protein Hox-D13a (hoxd13a).